The following is a 122-amino-acid chain: Large ribosomal subunit protein uL14 (122 aa).

This sequence belongs to the universal ribosomal protein uL14 family. As to quaternary structure, part of the 50S ribosomal subunit. Forms a cluster with proteins L3 and L19. In the 70S ribosome, L14 and L19 interact and together make contacts with the 16S rRNA in bridges B5 and B8.

Its function is as follows. Binds to 23S rRNA. Forms part of two intersubunit bridges in the 70S ribosome. In Paraburkholderia phymatum (strain DSM 17167 / CIP 108236 / LMG 21445 / STM815) (Burkholderia phymatum), this protein is Large ribosomal subunit protein uL14.